The sequence spans 215 residues: Large ribosomal subunit protein eL14 (215 aa).

The residue at position 79 (K79) is an N6-acetyllysine. N6-acetyllysine; alternate is present on K85. K85 is modified (N6-succinyllysine; alternate). Residue K124 forms a Glycyl lysine isopeptide (Lys-Gly) (interchain with G-Cter in SUMO2) linkage. S139 is modified (phosphoserine). The segment at 161–215 (VPAKKITAASKKAPAQKVPAQKATGQKAAPAPKAQKGQKAPAQKAPAPKASGKKA) is disordered. A run of 6 repeats spans residues 171-175 (KKAPA), 176-180 (QKVPA), 181-185 (QKATG), 186-190 (QKAAP), 193-195 (KAQ), and 196-198 (KGQ). The 4 X 5 AA tandem repeats of Q-K-A-[PAS]-X stretch occupies residues 171 to 190 (KKAPAQKVPAQKATGQKAAP). Residues 193-198 (KAQKGQ) form a 2 X 3 AA tandem repeats of K-[GA]-Q region. An N6-succinyllysine modification is found at K204.

The protein belongs to the eukaryotic ribosomal protein eL14 family. In terms of assembly, component of the large ribosomal subunit.

It is found in the cytoplasm. Component of the large ribosomal subunit. The ribosome is a large ribonucleoprotein complex responsible for the synthesis of proteins in the cell. This chain is Large ribosomal subunit protein eL14 (RPL14), found in Homo sapiens (Human).